The sequence spans 501 residues: Inactive cytidine monophosphate-N-acetylneuraminic acid hydroxylase (501 aa).

This sequence belongs to the CMP-Neu5Ac hydroxylase family. In terms of tissue distribution, widely expressed. Highly expressed in thymus. Not expressed in brain. May be expressed in adult stem cells (at protein level).

It localises to the cytoplasm. Sialic acids are components of carbohydrate chains of glycoconjugates and are involved in cell-cell recognition and cell-pathogen interactions. That protein has no CMP-N-acetylneuraminate monooxygenase activity and is not able to convert CMP-N-acetylneuraminic acid (CMP-Neu5Ac) into its hydroxylated derivative CMP-N-glycolylneuraminic acid (CMP-Neu5Gc), a sialic acid abundantly expressed at the surface of many cells in vertebrates. However, it may play a role in Wnt signaling. The protein is Inactive cytidine monophosphate-N-acetylneuraminic acid hydroxylase (CMAHP) of Homo sapiens (Human).